The following is a 715-amino-acid chain: Epidermal growth factor receptor kinase substrate 8-like protein 2 (715 aa).

In terms of domain architecture, PID spans 46–202; that stretch reads MHETSQYHVQ…RQRQSILPPP (157 aa). The interval 183-243 is disordered; that stretch reads QTLKGHQEKI…GFRRRESQEE (61 aa). Pro residues predominate over residues 199–208; the sequence is LPPPQGPAPI. Composition is skewed to basic and acidic residues over residues 213–222 and 234–243; these read RGGDSPEAKN and GFRRRESQEE. Ser-240 is modified (phosphoserine). A Phosphothreonine modification is found at Thr-303. A disordered region spans residues 448 to 487; it reads VSPVSRQSIRNSQKHSPTSEPTPPGDALPPVSSPHTHRGY. A Phosphoserine modification is found at Ser-449. The span at 451-466 shows a compositional bias: polar residues; it reads VSRQSIRNSQKHSPTS. At Thr-469 the chain carries Phosphothreonine. One can recognise an SH3 domain in the interval 492–551; the sequence is AMAKYVKILYDFTARNANELSVLKDEVLEVLEDGRQWWKLRSRSGQAGYVPCNILGEARP. Ser-570 bears the Phosphoserine mark.

It belongs to the EPS8 family. As to quaternary structure, interacts with ABI1. Part of a complex that contains SOS1, ABI1 and EPS8L2. Associates with F-actin. As to expression, detected in fibroblasts and placenta.

The protein localises to the cytoplasm. The protein resides in the cell projection. Its subcellular location is the stereocilium. Its function is as follows. Stimulates guanine exchange activity of SOS1. May play a role in membrane ruffling and remodeling of the actin cytoskeleton. In the cochlea, is required for stereocilia maintenance in adult hair cells. The chain is Epidermal growth factor receptor kinase substrate 8-like protein 2 (EPS8L2) from Homo sapiens (Human).